A 328-amino-acid polypeptide reads, in one-letter code: Gonadotropin-releasing hormone receptor (328 aa).

Over 1–38 (MANSASPEQNQNHCSAINSSILLTQGNLPTLTLSGKIR) the chain is Extracellular. N-linked (GlcNAc...) asparagine glycosylation occurs at asparagine 18. A helical membrane pass occupies residues 39-58 (VTVTFFLFLLSTAFNASFLL). The Cytoplasmic segment spans residues 59–77 (KLQKWTQRKEKGKKLSRMK). Residues 78–97 (VLLKHLTLANLLETLIVMPL) form a helical membrane-spanning segment. Residues 98 to 115 (DGMWNITVQWYAGEFLCK) are Extracellular-facing. N-linked (GlcNAc...) asparagine glycosylation is present at asparagine 102. A disulfide bridge connects residues cysteine 114 and cysteine 196. The chain crosses the membrane as a helical span at residues 116–137 (VLSYLKLFSMYAPAFMMVVISL). At 138–164 (DRSLAITRPLAVKSNSRLGRFMIGLAW) the chain is on the cytoplasmic side. A helical membrane pass occupies residues 165-184 (LLSSIFAGPQLYIFRMIHLA). Over 185-212 (DSSGQTEGFSQCVTHGSFPQWWHQAFYN) the chain is Extracellular. A helical membrane pass occupies residues 213-232 (FFTFSCLFIIPLLIMLICNA). The Cytoplasmic portion of the chain corresponds to 233 to 281 (KIMFTLTRVLQQDPHNLQLNQSKNNIPRARLRTLKMTVAFAASFIVCWT). The chain crosses the membrane as a helical span at residues 282 to 300 (PYYVLGIWYWFDPEMVNRV). The Extracellular portion of the chain corresponds to 301-306 (SDPVNH). The helical transmembrane segment at 307 to 326 (FFFLFAFLNPCFDPLIYGYF) threads the bilayer. Residues 327 to 328 (SL) are Cytoplasmic-facing.

This sequence belongs to the G-protein coupled receptor 1 family. As to expression, pituitary gland.

Its subcellular location is the cell membrane. Its function is as follows. Receptor for gonadotropin releasing hormone (GnRH) that mediates the action of GnRH to stimulate the secretion of the gonadotropic hormones luteinizing hormone (LH) and follicle-stimulating hormone (FSH). This receptor mediates its action by association with G-proteins that activate a phosphatidylinositol-calcium second messenger system. The chain is Gonadotropin-releasing hormone receptor (GNRHR) from Sus scrofa (Pig).